The chain runs to 327 residues: Toluene-4-monooxygenase system, hydroxylase component subunit beta (327 aa).

Belongs to the TmoE/XamoE family. In terms of assembly, the alkene monooxygenase multicomponent enzyme system is composed of an electron transfer component and a monooxygenase component interacting with the effector protein TmoD. The electron transfer component is composed of a ferredoxin reductase (TmoF) and a ferredoxin (TmoC), and the monooxygenase component is formed by a heterohexamer (dimer of heterotrimers) of two alpha subunits (TmoA), two beta subunits (TmoE) and two gamma subunits (TmoB).

It catalyses the reaction toluene + NADH + O2 + H(+) = 4-methylphenol + NAD(+) + H2O. It participates in xenobiotic degradation; toluene degradation. Inhibited by Zn(2+) and Cu(2+). Its function is as follows. Component of the toluene-4-monooxygenase multicomponent enzyme system which catalyzes the O2- and NADH-dependent hydroxylation of toluene to form p-cresol. Also able to convert benzene to phenol, catechol, and 1,2,3-trihydroxybenzene by successive hydroxylations. This chain is Toluene-4-monooxygenase system, hydroxylase component subunit beta, found in Ectopseudomonas mendocina (Pseudomonas mendocina).